The sequence spans 213 residues: Tellurium resistance protein TerX (213 aa).

This sequence belongs to the CAPAB/TerDEXZ family.

Its function is as follows. Not known; seems to contribute to the tellurium resistance (Ter) mechanism. Also involved in phage inhibition (Phi) and colicin resistance (PacB). This Serratia marcescens protein is Tellurium resistance protein TerX (terX).